A 413-amino-acid chain; its full sequence is Calmodulin-binding protein CmbB (413 aa).

FNIP repeat units lie at residues 104–148 (FNHP…LSDC), 149–192 (YNQA…LGKG), 222–257 (SLPPNLEFLLLSDAFNHPIEAGMLPPKLKTLTFGDG), 258–301 (FNQP…FHQF), 304–343 (FSQTFENIPSHVQTVEFGYTYNKPITSLPSHLKYIKFSEK), and 344–386 (YNHP…LNGY).

In terms of assembly, interacts with calmodulin in the presence of Ca(2+).

In Dictyostelium discoideum (Social amoeba), this protein is Calmodulin-binding protein CmbB.